Here is a 266-residue protein sequence, read N- to C-terminus: Putative pyruvate, phosphate dikinase regulatory protein (266 aa).

Residue 149–156 (GVSRTSKT) participates in ADP binding.

Belongs to the pyruvate, phosphate/water dikinase regulatory protein family. PDRP subfamily.

The catalysed reaction is N(tele)-phospho-L-histidyl/L-threonyl-[pyruvate, phosphate dikinase] + ADP = N(tele)-phospho-L-histidyl/O-phospho-L-threonyl-[pyruvate, phosphate dikinase] + AMP + H(+). It carries out the reaction N(tele)-phospho-L-histidyl/O-phospho-L-threonyl-[pyruvate, phosphate dikinase] + phosphate + H(+) = N(tele)-phospho-L-histidyl/L-threonyl-[pyruvate, phosphate dikinase] + diphosphate. Its function is as follows. Bifunctional serine/threonine kinase and phosphorylase involved in the regulation of the pyruvate, phosphate dikinase (PPDK) by catalyzing its phosphorylation/dephosphorylation. The protein is Putative pyruvate, phosphate dikinase regulatory protein of Geobacillus sp. (strain WCH70).